The sequence spans 211 residues: NADH-quinone oxidoreductase subunit I 1 (211 aa).

4Fe-4S ferredoxin-type domains are found at residues Leu50 to Ala80 and Arg96 to Glu125. [4Fe-4S] cluster-binding residues include Cys60, Cys63, Cys66, Cys70, Cys105, Cys108, Cys111, and Cys115. The tract at residues Gln192–Arg211 is disordered.

It belongs to the complex I 23 kDa subunit family. In terms of assembly, NDH-1 is composed of 14 different subunits. Subunits NuoA, H, J, K, L, M, N constitute the membrane sector of the complex. It depends on [4Fe-4S] cluster as a cofactor.

The protein localises to the cell membrane. It carries out the reaction a quinone + NADH + 5 H(+)(in) = a quinol + NAD(+) + 4 H(+)(out). NDH-1 shuttles electrons from NADH, via FMN and iron-sulfur (Fe-S) centers, to quinones in the respiratory chain. The immediate electron acceptor for the enzyme in this species is believed to be ubiquinone. Couples the redox reaction to proton translocation (for every two electrons transferred, four hydrogen ions are translocated across the cytoplasmic membrane), and thus conserves the redox energy in a proton gradient. The protein is NADH-quinone oxidoreductase subunit I 1 of Streptomyces coelicolor (strain ATCC BAA-471 / A3(2) / M145).